The sequence spans 597 residues: Protein IQ-DOMAIN 29 (597 aa).

Residues 1-31 form a disordered region; that stretch reads MGKTPSPGKWIKSLLGKKSSKSSLEKGGEKL. IQ domains follow at residues 106–134, 135–153, and 157–183; these read LEEA…GITR, VQAV…ATYS, and GIVK…QKTN. Residues 159 to 173 form a calmodulin-binding region; it reads VKVQALVRGKKARSS. The Nuclear localization signal 1 signature appears at 264-271; the sequence is KKRSFQAV. 2 disordered regions span residues 268-379 and 407-597; these read FQAV…KKEI and LIPV…EWKR. The span at 289 to 300 shows a compositional bias: low complexity; it reads STTANSSTSRST. Residues 319 to 329 show a composition bias toward basic and acidic residues; the sequence is ELSKIENDKSK. The Nuclear localization signal 2 signature appears at 356–363; the sequence is HKKASLSN. The span at 414 to 463 shows a compositional bias: basic and acidic residues; it reads KESDLDKDEKSLVLDKPEQDELRTAERDDKAEEELKTAERDDSAEEKIQE. Residues 467-480 show a composition bias toward polar residues; it reads QISSENGNVASENT. Basic and acidic residues predominate over residues 481–500; sequence KPSDRRASLPAKIENHHQDD. Residues 572-584 are compositionally biased toward polar residues; the sequence is GSMNSDRSFSSSK. Residues 585–597 show a composition bias toward basic and acidic residues; it reads DIGDKSTKAEWKR.

Belongs to the IQD family. In terms of assembly, binds to multiple calmodulin (CaM) in the presence of Ca(2+) and CaM-like proteins.

It localises to the nucleus. Its subcellular location is the nucleus envelope. The protein resides in the cytoplasm. It is found in the cytoskeleton. The protein localises to the cell membrane. May be involved in cooperative interactions with calmodulins or calmodulin-like proteins. Recruits calmodulin proteins to microtubules, thus being a potential scaffold in cellular signaling and trafficking. May associate with nucleic acids and regulate gene expression at the transcriptional or post-transcriptional level. The sequence is that of Protein IQ-DOMAIN 29 from Arabidopsis thaliana (Mouse-ear cress).